An 87-amino-acid polypeptide reads, in one-letter code: UPF0248 protein TSIB_1445 (87 aa).

The protein belongs to the UPF0248 family.

This is UPF0248 protein TSIB_1445 from Thermococcus sibiricus (strain DSM 12597 / MM 739).